A 205-amino-acid polypeptide reads, in one-letter code: Small ribosomal subunit protein uS4 (205 aa).

The region spanning 94–157 is the S4 RNA-binding domain; the sequence is SRLDAVVYRA…RNLALVLEAL (64 aa).

Belongs to the universal ribosomal protein uS4 family. As to quaternary structure, part of the 30S ribosomal subunit. Contacts protein S5. The interaction surface between S4 and S5 is involved in control of translational fidelity.

Functionally, one of the primary rRNA binding proteins, it binds directly to 16S rRNA where it nucleates assembly of the body of the 30S subunit. With S5 and S12 plays an important role in translational accuracy. The protein is Small ribosomal subunit protein uS4 of Hyphomonas neptunium (strain ATCC 15444).